A 303-amino-acid polypeptide reads, in one-letter code: Endo-1,3;1,4-beta-D-glucanase (303 aa).

An N-terminal signal peptide occupies residues 1 to 43 (MPSSAQVLLCLAAVLAAAAATTAEAHSQCLDNPPDRSIHGRQL). N-linked (GlcNAc...) asparagine glycans are attached at residues Asn115, Asn197, and Asn257.

In terms of processing, glycosylated.

Its subcellular location is the secreted. Plays a role in control of plant growth. Mediates specific degradation of cell wall (1,3)(1,4)-beta-D-glucans and is related to auxin-mediated growth and development of cereal coleoptiles. In Zea mays (Maize), this protein is Endo-1,3;1,4-beta-D-glucanase.